Consider the following 197-residue polypeptide: MIDKNDITGLILAGGRASRMGSVDKGLQNFHGMPLAMHTLLRLGPQVGDIMINANRNLAAYEAMGAPVWPDALPDFPGPLAGFAAGLERCETPYMVTAPCDTPNFPADMVSRLADALIAEGAQIAMAATTADGALRTQPVFCLMRIDLLDSLLEFLHSGQRKTEIWANQHRCAIVRFDDAQAFAGANTLAELRQLQS.

Residues 12 to 14 (LAG), K25, N53, D71, and D101 each bind GTP. Residue D101 coordinates Mg(2+).

This sequence belongs to the MobA family. As to quaternary structure, monomer. The cofactor is Mg(2+).

It is found in the cytoplasm. The enzyme catalyses Mo-molybdopterin + GTP + H(+) = Mo-molybdopterin guanine dinucleotide + diphosphate. Transfers a GMP moiety from GTP to Mo-molybdopterin (Mo-MPT) cofactor (Moco or molybdenum cofactor) to form Mo-molybdopterin guanine dinucleotide (Mo-MGD) cofactor. The sequence is that of Molybdenum cofactor guanylyltransferase from Bordetella pertussis (strain Tohama I / ATCC BAA-589 / NCTC 13251).